We begin with the raw amino-acid sequence, 831 residues long: Prolactin receptor (831 aa).

Positions 1–23 are cleaved as a signal peptide; the sequence is MKQDLISSVQIILFLPLTTVGLA. Residues 24–438 lie on the Extracellular side of the membrane; that stretch reads GQSFPGKPKI…QIPNDFRVKD (415 aa). 4 Fibronectin type-III domains span residues 30 to 128, 129 to 227, 230 to 331, and 332 to 433; these read KPKI…VQPG, SPVN…IPSG, PPEK…VQPD, and PPVN…IPND. A disulfide bridge connects residues cysteine 36 and cysteine 46. A glycan (N-linked (GlcNAc...) asparagine) is linked at asparagine 59. Residues cysteine 75 and cysteine 86 are joined by a disulfide bond. 8 N-linked (GlcNAc...) asparagine glycosylation sites follow: asparagine 91, asparagine 100, asparagine 112, asparagine 132, asparagine 262, asparagine 303, asparagine 315, and asparagine 335. Zn(2+) contacts are provided by aspartate 414 and histidine 416. The WSXWS motif motif lies at 419-423; it reads WSEWS. A helical membrane pass occupies residues 439-459; it reads MIVWIVLGVLSSLICLIMSWT. Topologically, residues 460–831 are cytoplasmic; sequence MVLKGYRMIT…DPSSFMPSFK (372 aa). Residues 471–479 carry the Box 1 motif motif; that stretch reads MLPPVPGPK. Disordered stretches follow at residues 527–563, 774–796, and 808–831; these read QQLM…SPSL, RVPH…QQGQ, and PSDC…PSFK. Residues 787 to 796 show a composition bias toward polar residues; the sequence is ETSQSLQQGQ.

The protein belongs to the type I cytokine receptor family. Type 1 subfamily.

It localises to the membrane. In terms of biological role, this is a receptor for the anterior pituitary hormone prolactin. The chain is Prolactin receptor (PRLR) from Gallus gallus (Chicken).